The following is a 361-amino-acid chain: Phosphate acyltransferase (361 aa).

The disordered stretch occupies residues 342–361; the sequence is ADGAAAEQGPTPRRTAPRQT.

Belongs to the PlsX family. Homodimer. Probably interacts with PlsY.

It is found in the cytoplasm. The catalysed reaction is a fatty acyl-[ACP] + phosphate = an acyl phosphate + holo-[ACP]. Its pathway is lipid metabolism; phospholipid metabolism. Functionally, catalyzes the reversible formation of acyl-phosphate (acyl-PO(4)) from acyl-[acyl-carrier-protein] (acyl-ACP). This enzyme utilizes acyl-ACP as fatty acyl donor, but not acyl-CoA. The protein is Phosphate acyltransferase of Anaeromyxobacter sp. (strain K).